An 89-amino-acid polypeptide reads, in one-letter code: Small ribosomal subunit protein uS15 (89 aa).

It belongs to the universal ribosomal protein uS15 family. In terms of assembly, part of the 30S ribosomal subunit. Forms a bridge to the 50S subunit in the 70S ribosome, contacting the 23S rRNA.

Functionally, one of the primary rRNA binding proteins, it binds directly to 16S rRNA where it helps nucleate assembly of the platform of the 30S subunit by binding and bridging several RNA helices of the 16S rRNA. Its function is as follows. Forms an intersubunit bridge (bridge B4) with the 23S rRNA of the 50S subunit in the ribosome. In Agrobacterium fabrum (strain C58 / ATCC 33970) (Agrobacterium tumefaciens (strain C58)), this protein is Small ribosomal subunit protein uS15.